A 239-amino-acid chain; its full sequence is 1-(5-phosphoribosyl)-5-[(5-phosphoribosylamino)methylideneamino] imidazole-4-carboxamide isomerase (239 aa).

The Proton acceptor role is filled by D12. D132 functions as the Proton donor in the catalytic mechanism.

Belongs to the HisA/HisF family.

Its subcellular location is the cytoplasm. The catalysed reaction is 1-(5-phospho-beta-D-ribosyl)-5-[(5-phospho-beta-D-ribosylamino)methylideneamino]imidazole-4-carboxamide = 5-[(5-phospho-1-deoxy-D-ribulos-1-ylimino)methylamino]-1-(5-phospho-beta-D-ribosyl)imidazole-4-carboxamide. It participates in amino-acid biosynthesis; L-histidine biosynthesis; L-histidine from 5-phospho-alpha-D-ribose 1-diphosphate: step 4/9. The sequence is that of 1-(5-phosphoribosyl)-5-[(5-phosphoribosylamino)methylideneamino] imidazole-4-carboxamide isomerase from Natronomonas pharaonis (strain ATCC 35678 / DSM 2160 / CIP 103997 / JCM 8858 / NBRC 14720 / NCIMB 2260 / Gabara) (Halobacterium pharaonis).